A 264-amino-acid polypeptide reads, in one-letter code: Short chain dehydrogenase/reductase nsrJ (264 aa).

The NADP(+) site is built by I24, D70, N97, and R130. Residues S146 and S147 each act as proton donor in the active site. Positions 161, 165, and 196 each coordinate NADP(+). Y161 acts as the Proton acceptor in catalysis. The active-site Lowers pKa of active site Tyr is K165.

The protein belongs to the short-chain dehydrogenases/reductases (SDR) family.

It participates in secondary metabolite biosynthesis. In terms of biological role, short chain dehydrogenase/reductase; part of the gene cluster that mediates the biosynthesis of the tetrahydroxanthone dimer neosartorin, which exhibits antibacterial activity. The two different monomeric units appear to be synthesized by the same set of enzymes, among which the Baeyer-Villiger monooxygenase nsrF is the key enzyme for the divergence of the biosynthetic routes. The pathway begins with the synthesis of atrochrysone thioester by the polyketide synthase nsrB. The atrochrysone carboxyl ACP thioesterase nsrC then breaks the thioester bond and releases the atrochrysone carboxylic acid from AacuL. Atrochrysone carboxylic acid is decarboxylated by the decarboxylase nsrE, and oxidized by the anthrone oxygenase nsrD to yield emodin. Emodin is then reduced to emodin hydroquinone by the oxidoreductase nsrR. A-ring reduction by the short chain dehydrogenase nsrJ, dehydration by the scytalone dehydratase-like protein nsrI and probable spontaneous re-oxidation, results in overall deoxygenation to chrysophanol. The Baeyer-Villiger monooxygenase nsrF accepts chrysophanol as a substrate to insert one oxygen atom at two different positions to yield the precursors of both monomric units. NsrF is promiscuous/flexible in interacting with the 2 (non methylated and methylated) aromatic rings of chrysophanol, thus diverging the biosynthetic pathway at this point. After the hydrolysis of the lactones, methylesterification by the methyltransferase nsrG yields respectively moniliphenone and 2,2',6'-trihydroxy-4-methyl-6-methoxya-cyldiphenylmethanone. The next steps are the hydroxylation by the FAD-dependent monooxygenase nsrK, followed by isomerization by the monooxygenase nsrQ. The short chain dehydrogenase/reductase nsrO then catalyzes the C-5 ketoreduction to give the xanthone skeleton of blennolide C and 5-acetylblennolide A. The acetyltransferase nsrL has a strict substrate specificity and uses only blennolide A but not blennolide C to yield 5-acetylblennolide A as the single-acetylated product. In the final step of the biosynthesis, the heterodimerization of the 2 xanthones, blennolide C and 5-acetylblennolide A, is catalyzed by the cytochrome P450 monooxygenase nsrP. NsrP can utilize at least three different xanthones as its substrates to perform the dimerization reaction. The polypeptide is Short chain dehydrogenase/reductase nsrJ (Aspergillus novofumigatus (strain IBT 16806)).